We begin with the raw amino-acid sequence, 229 residues long: Large ribosomal subunit protein uL1 (229 aa).

The protein belongs to the universal ribosomal protein uL1 family. In terms of assembly, part of the 50S ribosomal subunit.

In terms of biological role, binds directly to 23S rRNA. The L1 stalk is quite mobile in the ribosome, and is involved in E site tRNA release. Functionally, protein L1 is also a translational repressor protein, it controls the translation of the L11 operon by binding to its mRNA. In Caulobacter vibrioides (strain ATCC 19089 / CIP 103742 / CB 15) (Caulobacter crescentus), this protein is Large ribosomal subunit protein uL1.